The following is a 157-amino-acid chain: 2-C-methyl-D-erythritol 2,4-cyclodiphosphate synthase (157 aa).

A divalent metal cation contacts are provided by aspartate 8 and histidine 10. 4-CDP-2-C-methyl-D-erythritol 2-phosphate is bound by residues 8–10 (DVH) and 34–35 (HS). Histidine 42 serves as a coordination point for a divalent metal cation. 4-CDP-2-C-methyl-D-erythritol 2-phosphate contacts are provided by residues 56 to 58 (DIG), 61 to 65 (FPDTD), 100 to 106 (AQAPKMA), 132 to 135 (TTTE), phenylalanine 139, and arginine 142.

The protein belongs to the IspF family. Homotrimer. A divalent metal cation serves as cofactor.

It carries out the reaction 4-CDP-2-C-methyl-D-erythritol 2-phosphate = 2-C-methyl-D-erythritol 2,4-cyclic diphosphate + CMP. Its pathway is isoprenoid biosynthesis; isopentenyl diphosphate biosynthesis via DXP pathway; isopentenyl diphosphate from 1-deoxy-D-xylulose 5-phosphate: step 4/6. Involved in the biosynthesis of isopentenyl diphosphate (IPP) and dimethylallyl diphosphate (DMAPP), two major building blocks of isoprenoid compounds. Catalyzes the conversion of 4-diphosphocytidyl-2-C-methyl-D-erythritol 2-phosphate (CDP-ME2P) to 2-C-methyl-D-erythritol 2,4-cyclodiphosphate (ME-CPP) with a corresponding release of cytidine 5-monophosphate (CMP). The polypeptide is 2-C-methyl-D-erythritol 2,4-cyclodiphosphate synthase (Pseudomonas paraeruginosa (strain DSM 24068 / PA7) (Pseudomonas aeruginosa (strain PA7))).